The primary structure comprises 505 residues: ATP synthase subunit alpha (505 aa).

Position 170-177 (170-177 (GDRQTGKT)) interacts with ATP.

This sequence belongs to the ATPase alpha/beta chains family. In terms of assembly, F-type ATPases have 2 components, CF(1) - the catalytic core - and CF(0) - the membrane proton channel. CF(1) has five subunits: alpha(3), beta(3), gamma(1), delta(1), epsilon(1). CF(0) has four main subunits: a(1), b(1), b'(1) and c(9-12).

It localises to the cellular thylakoid membrane. The enzyme catalyses ATP + H2O + 4 H(+)(in) = ADP + phosphate + 5 H(+)(out). In terms of biological role, produces ATP from ADP in the presence of a proton gradient across the membrane. The alpha chain is a regulatory subunit. This is ATP synthase subunit alpha from Trichodesmium erythraeum (strain IMS101).